Reading from the N-terminus, the 237-residue chain is uncharacterized protein (237 aa).

The helical transmembrane segment at 53–70 threads the bilayer; sequence LIFLATVLAGLILFYFGV. The interval 85–155 is disordered; the sequence is PPIVIKPVAP…TQEKKDVKVA (71 aa). Residues 98-157 are a coiled coil; sequence KTQESNQTTKKEVKQEEQKKEEPKKMVQKQETQEKREVKKSEKNEVKQTQEKKDVKVAKK. Composition is skewed to basic and acidic residues over residues 106–122 and 128–155; these read TKKE…EPKK and ETQE…VKVA. Residues 165-237 enclose the SPOR domain; the sequence is AANLRTYKFQ…HFKDAIFVRK (73 aa).

The protein localises to the membrane. This is an uncharacterized protein from Aquifex aeolicus (strain VF5).